The primary structure comprises 379 residues: tRNA(Met) cytidine acetate ligase (379 aa).

ATP-binding positions include 7-20 (ITEY…HQYH), G100, N153, and R178.

It belongs to the TmcAL family.

It is found in the cytoplasm. It carries out the reaction cytidine(34) in elongator tRNA(Met) + acetate + ATP = N(4)-acetylcytidine(34) in elongator tRNA(Met) + AMP + diphosphate. In terms of biological role, catalyzes the formation of N(4)-acetylcytidine (ac(4)C) at the wobble position of elongator tRNA(Met), using acetate and ATP as substrates. First activates an acetate ion to form acetyladenylate (Ac-AMP) and then transfers the acetyl group to tRNA to form ac(4)C34. The protein is tRNA(Met) cytidine acetate ligase of Staphylococcus aureus (strain MRSA252).